We begin with the raw amino-acid sequence, 227 residues long: Isopentenyl-diphosphate Delta-isomerase 1 (227 aa).

K36 contributes to the substrate binding site. Mg(2+)-binding residues include H40 and H51. One can recognise a Nudix hydrolase domain in the interval 49 to 199 (LLHRAFSVFL…EIKITPWFKI (151 aa)). Substrate is bound by residues R70 and K74. C86 is an active-site residue. S87 is a binding site for substrate. Mg(2+) is bound by residues E146 and E148. Residue E148 is part of the active site. Position 176 is an N6-acetyllysine (K176). The short motif at 225–227 (YRI) is the Microbody targeting signal element.

Belongs to the IPP isomerase type 1 family. As to quaternary structure, monomer. It depends on Mg(2+) as a cofactor.

The protein localises to the peroxisome. It catalyses the reaction isopentenyl diphosphate = dimethylallyl diphosphate. Its pathway is isoprenoid biosynthesis; dimethylallyl diphosphate biosynthesis; dimethylallyl diphosphate from isopentenyl diphosphate: step 1/1. In terms of biological role, catalyzes the 1,3-allylic rearrangement of the homoallylic substrate isopentenyl (IPP) to its highly electrophilic allylic isomer, dimethylallyl diphosphate (DMAPP). The chain is Isopentenyl-diphosphate Delta-isomerase 1 (IDI1) from Pongo abelii (Sumatran orangutan).